Here is a 157-residue protein sequence, read N- to C-terminus: S-ribosylhomocysteine lyase (157 aa).

The Fe cation site is built by H53, H57, and C124.

This sequence belongs to the LuxS family. As to quaternary structure, homodimer. Requires Fe cation as cofactor.

The catalysed reaction is S-(5-deoxy-D-ribos-5-yl)-L-homocysteine = (S)-4,5-dihydroxypentane-2,3-dione + L-homocysteine. Its function is as follows. Involved in the synthesis of autoinducer 2 (AI-2) which is secreted by bacteria and is used to communicate both the cell density and the metabolic potential of the environment. The regulation of gene expression in response to changes in cell density is called quorum sensing. Catalyzes the transformation of S-ribosylhomocysteine (RHC) to homocysteine (HC) and 4,5-dihydroxy-2,3-pentadione (DPD). This chain is S-ribosylhomocysteine lyase, found in Borrelia garinii subsp. bavariensis (strain ATCC BAA-2496 / DSM 23469 / PBi) (Borreliella bavariensis).